Here is a 596-residue protein sequence, read N- to C-terminus: MLFPKDTLTREIKDLSGIWRFKADPDNRGREEKWHHQPLQDTIPMPVPASYNDITQDAALRDHIGDVWYEQTFIVPRSWSGDRMMLWIGSACHHAVVWVNGVEVASHKGGFLPFEADITRVAVPGRENRVTIVVNNVLNWQTLPPGRIKTFDDEKHPEGYRVQEYFHDFFNYAGLHRPVKLYRTSGLFIQDITITTDVQGESGVVGYSIECSQPEGEVRVKLLDEDGKEAATGKGSSGTLQVENARLWKPLQAYLYTLHVELLDSYGQLADHYQLQVGIRTVKVEGTRFLINGERFYFKGFGKHEDSDIRGKGLDQAVNVKDFNLLKWINANSFRTSHYPYAEELLELADREGIVVIGEVPAVGFTFFNYNDKVYTPDQANEETLAHHHDVLSDLIARDKNHPSVVMWSLANEAATFQDEAVPYFRQLADTARRLDPQRPITIVQWPLPDKCKVAQFFDVICVNRYYSWYQDPGALELVEHQVEWELTNWYRNFGKPVIMTEYGADAIAGFHQDPPVMFTEEYQEELLTRYHNVFDRLDFVIGEHVWAFADFATKQGITRINGNKKGVFTRQRQPKAAARMLRSRWGEMGEYPEKL.

Aspartate 168 and asparagine 412 together coordinate D-glucuronate. Glutamate 413 functions as the Proton donor in the catalytic mechanism. D-glucuronate-binding residues include asparagine 464, tyrosine 470, glutamate 502, tryptophan 547, and lysine 566. Glutamate 502 serves as the catalytic Nucleophile. The N-K motif signature appears at 564-566 (NKK).

It belongs to the glycosyl hydrolase 2 family.

It localises to the cytoplasm. The catalysed reaction is a beta-D-glucuronoside + H2O = D-glucuronate + an alcohol. Functionally, displays beta-glucuronidase activity with the artificial substrate p-nitrophenyl-beta-D-glucuronide (PNPG). Is probably involved in the metabolism of oligosaccharides containing the 3-O-beta-D-glucopyranosyl-beta-D-glucuronide structure released from bacterial and plant acidic carbohydrates. This chain is Beta-glucuronidase, found in Paenibacillus borealis.